The primary structure comprises 347 residues: Protein RecA (347 aa).

An ATP-binding site is contributed by 67-74 (GPESSGKT).

The protein belongs to the RecA family.

The protein localises to the cytoplasm. Its function is as follows. Can catalyze the hydrolysis of ATP in the presence of single-stranded DNA, the ATP-dependent uptake of single-stranded DNA by duplex DNA, and the ATP-dependent hybridization of homologous single-stranded DNAs. It interacts with LexA causing its activation and leading to its autocatalytic cleavage. The protein is Protein RecA of Helicobacter pylori (strain P12).